Reading from the N-terminus, the 100-residue chain is Protein translation factor SUI1 homolog (100 aa).

This sequence belongs to the SUI1 family.

The chain is Protein translation factor SUI1 homolog from Sulfurisphaera tokodaii (strain DSM 16993 / JCM 10545 / NBRC 100140 / 7) (Sulfolobus tokodaii).